A 595-amino-acid chain; its full sequence is Myb-like protein D (595 aa).

Disordered regions lie at residues 1–47 (MQQQ…NGLV), 55–74 (QQYQ…DEGE), 82–266 (DESQ…NNRK), and 319–445 (VLQK…IWTQ). The segment covering 19 to 47 (DNYNNNNSNINTNNNNSINDYENQNNGLV) has biased composition (low complexity). Positions 60-74 (DQNDSFDDDSMDEGE) are enriched in acidic residues. Low complexity-rich tracts occupy residues 90–212 (NNNN…ENNN) and 225–264 (NNNN…NNNN). Positions 324–348 (TLNRNRSRSRSRSNSRSHSRSRSRS) are enriched in basic residues. Low complexity-rich tracts occupy residues 349–368 (RSLS…YSRS) and 376–420 (NNNN…NNNN). Over residues 423-434 (RKSEDDNQDDGK) the composition is skewed to basic and acidic residues. The region spanning 435–489 (KKHRKNAIWTQEEDEKMAQLYNKYGKSWKAIHSHFDDKTREQVQSHGQYLIRIGK) is the HTH myb-type domain. The H-T-H motif DNA-binding region spans 462 to 485 (WKAIHSHFDDKTREQVQSHGQYLI). Residues 494-595 (HRDGRKERRK…NSSNYVNNDN (102 aa)) form a disordered region. A compositionally biased stretch (low complexity) spans 517 to 595 (QQNQQNNNNN…NSSNYVNNDN (79 aa)).

It is found in the nucleus. The protein is Myb-like protein D (mybD) of Dictyostelium discoideum (Social amoeba).